Here is a 31-residue protein sequence, read N- to C-terminus: Photosystem II reaction center protein T (31 aa).

The chain crosses the membrane as a helical span at residues 3-23 (SLVYIFVFVVALGVLFFAIAF).

This sequence belongs to the PsbT family. As to quaternary structure, PSII is composed of 1 copy each of membrane proteins PsbA, PsbB, PsbC, PsbD, PsbE, PsbF, PsbH, PsbI, PsbJ, PsbK, PsbL, PsbM, PsbT, PsbX, PsbY, PsbZ, Psb30/Ycf12, peripheral proteins PsbO, CyanoQ (PsbQ), PsbU, PsbV and a large number of cofactors. It forms dimeric complexes.

It localises to the cellular thylakoid membrane. Its function is as follows. Found at the monomer-monomer interface of the photosystem II (PS II) dimer, plays a role in assembly and dimerization of PSII. PSII is a light-driven water plastoquinone oxidoreductase, using light energy to abstract electrons from H(2)O, generating a proton gradient subsequently used for ATP formation. The polypeptide is Photosystem II reaction center protein T (Synechococcus elongatus (strain ATCC 33912 / PCC 7942 / FACHB-805) (Anacystis nidulans R2)).